The following is a 486-amino-acid chain: Cardiolipin synthase A (486 aa).

2 helical membrane passes run 3–23 (TFYT…IAGV) and 38–58 (MAWL…YLSV). PLD phosphodiesterase domains are found at residues 219–246 (MDLR…VDPR) and 399–426 (EGGL…DMRS). Catalysis depends on residues H224, K226, D231, H404, K406, and D411.

This sequence belongs to the phospholipase D family. Cardiolipin synthase subfamily. ClsA sub-subfamily.

It is found in the cell inner membrane. The enzyme catalyses 2 a 1,2-diacyl-sn-glycero-3-phospho-(1'-sn-glycerol) = a cardiolipin + glycerol. Catalyzes the reversible phosphatidyl group transfer from one phosphatidylglycerol molecule to another to form cardiolipin (CL) (diphosphatidylglycerol) and glycerol. The sequence is that of Cardiolipin synthase A from Salmonella paratyphi A (strain ATCC 9150 / SARB42).